Consider the following 364-residue polypeptide: UDP-N-acetylglucosamine--N-acetylmuramyl-(pentapeptide) pyrophosphoryl-undecaprenol N-acetylglucosamine transferase (364 aa).

Residues threonine 13 to glycine 15, asparagine 125, arginine 165, serine 192, and glutamine 293 contribute to the UDP-N-acetyl-alpha-D-glucosamine site.

It belongs to the glycosyltransferase 28 family. MurG subfamily.

It is found in the cell inner membrane. It catalyses the reaction di-trans,octa-cis-undecaprenyl diphospho-N-acetyl-alpha-D-muramoyl-L-alanyl-D-glutamyl-meso-2,6-diaminopimeloyl-D-alanyl-D-alanine + UDP-N-acetyl-alpha-D-glucosamine = di-trans,octa-cis-undecaprenyl diphospho-[N-acetyl-alpha-D-glucosaminyl-(1-&gt;4)]-N-acetyl-alpha-D-muramoyl-L-alanyl-D-glutamyl-meso-2,6-diaminopimeloyl-D-alanyl-D-alanine + UDP + H(+). Its pathway is cell wall biogenesis; peptidoglycan biosynthesis. Cell wall formation. Catalyzes the transfer of a GlcNAc subunit on undecaprenyl-pyrophosphoryl-MurNAc-pentapeptide (lipid intermediate I) to form undecaprenyl-pyrophosphoryl-MurNAc-(pentapeptide)GlcNAc (lipid intermediate II). In Cereibacter sphaeroides (strain ATCC 17025 / ATH 2.4.3) (Rhodobacter sphaeroides), this protein is UDP-N-acetylglucosamine--N-acetylmuramyl-(pentapeptide) pyrophosphoryl-undecaprenol N-acetylglucosamine transferase.